We begin with the raw amino-acid sequence, 806 residues long: ATP-dependent RNA helicase DBP7 (806 aa).

Residues 24 to 135 (KGGRWRDRLK…AEPAKASNAP (112 aa)) form a disordered region. The segment covering 46–56 (PSSTPPRNRTT) has biased composition (polar residues). Over residues 69–78 (PRTEDGESHR) the composition is skewed to basic and acidic residues. A compositionally biased stretch (polar residues) spans 100 to 113 (GQISSSLFTSNPSA). Positions 141–170 (ENFHSLGVSRRVAQHLATKLEMKAPTAIQK) match the Q motif motif. Positions 174 to 380 (PQLINGDSDA…EISLEDAIHI (207 aa)) constitute a Helicase ATP-binding domain. 187–194 (AETGSGKT) contacts ATP. Positions 309 to 312 (DEGD) match the DEAD box motif. In terms of domain architecture, Helicase C-terminal spans 413-611 (RLVTLIALLK…GLASVVNLPS (199 aa)). Disordered stretches follow at residues 642–677 (PAGA…YKPK) and 741–784 (TAAN…VDED). Positions 755 to 768 (SGGGGGGGRVGFGR) are enriched in gly residues.

This sequence belongs to the DEAD box helicase family. DDX31/DBP7 subfamily.

The protein resides in the nucleus. It is found in the nucleolus. It carries out the reaction ATP + H2O = ADP + phosphate + H(+). ATP-binding RNA helicase involved in the biogenesis of 60S ribosomal subunits and is required for the normal formation of 25S and 5.8S rRNAs. In Chaetomium globosum (strain ATCC 6205 / CBS 148.51 / DSM 1962 / NBRC 6347 / NRRL 1970) (Soil fungus), this protein is ATP-dependent RNA helicase DBP7 (DBP7).